A 95-amino-acid polypeptide reads, in one-letter code: Enhancer of yellow 2 transcription factor (95 aa).

It belongs to the ENY2 family. As to quaternary structure, component of the nuclear pore complex (NPC)-associated AMEX complex (anchoring and mRNA export complex), composed of at least e(y)2 and xmas-2. Component of the SAGA transcription coactivator-HAT complexes, at least composed of Ada2b, e(y)2, Pcaf/Gcn5, Taf10 and Nipped-A/Trrap. Within the SAGA complex, e(y)2, Sgf11, and not/nonstop form an additional subcomplex of SAGA called the DUB module (deubiquitination module). Component of the THO complex, composed of at least e(y)2, HPR1, THO2, THOC5, THOC6 and THOC7. Interacts with e(y)1. Interacts with su(Hw) (via zinc fingers). Interacts with xmas-2; required for localization to the nuclear periphery. Interacts with the nuclear pore complex (NPC).

The protein localises to the nucleus. It localises to the nucleoplasm. The protein resides in the cytoplasm. Its function is as follows. Involved in mRNA export coupled transcription activation by association with both the AMEX and the SAGA complexes. The SAGA complex is a multiprotein complex that activates transcription by remodeling chromatin and mediating histone acetylation and deubiquitination. Within the SAGA complex, participates in a subcomplex that specifically deubiquitinates histone H2B. The SAGA complex is recruited to specific gene promoters by activators, where it is required for transcription. Required for nuclear receptor-mediated transactivation. Involved in transcription elongation by recruiting the THO complex onto nascent mRNA. The AMEX complex functions in docking export-competent ribonucleoprotein particles (mRNPs) to the nuclear entrance of the nuclear pore complex (nuclear basket). AMEX participates in mRNA export and accurate chromatin positioning in the nucleus by tethering genes to the nuclear periphery. This is Enhancer of yellow 2 transcription factor from Drosophila virilis (Fruit fly).